The sequence spans 157 residues: Phosphopantetheine adenylyltransferase (157 aa).

It belongs to the eukaryotic CoaD family.

Its subcellular location is the cytoplasm. The enzyme catalyses (R)-4'-phosphopantetheine + ATP + H(+) = 3'-dephospho-CoA + diphosphate. The protein operates within cofactor biosynthesis; coenzyme A biosynthesis. Functionally, reversibly transfers an adenylyl group from ATP to 4'-phosphopantetheine, yielding dephospho-CoA (dPCoA) and pyrophosphate. This Methanopyrus kandleri (strain AV19 / DSM 6324 / JCM 9639 / NBRC 100938) protein is Phosphopantetheine adenylyltransferase.